The following is a 740-amino-acid chain: DNA (cytosine-5)-methyltransferase 3C (740 aa).

Disordered regions lie at residues 75 to 99 and 248 to 312; these read LTGD…PVMP and FKPT…DVTN. Positions 309–441 constitute an ADD domain; the sequence is DVTNNKGNLE…LQDFFTTDPD (133 aa). A GATA-type; atypical zinc finger spans residues 320–350; sequence HCLSCGRKDPVSFHPLFEGGLCQSCRDRFLE. A PHD-type; atypical zinc finger spans residues 361-417; that stretch reads QSYCTVCCEGRELLLCSNTSCCRCFCVECLEVLVGAGTAEDVKLQEPWSCYMCLPQR. The region spanning 462 to 740 is the SAM-dependent MTase C5-type domain; that stretch reads IRVLSLFDGI…APLKDHFACE (279 aa). Positions 471, 473, 492, 514, and 515 each coordinate S-adenosyl-L-methionine. Residue Cys538 is part of the active site. Residues Arg719 and Trp721 each contribute to the S-adenosyl-L-methionine site.

Belongs to the class I-like SAM-binding methyltransferase superfamily. C5-methyltransferase family. As to quaternary structure, homodimer. Interacts with DNMT3L. Interacts with SPOCD1; recruiting Dnmt3C to transposons. In terms of tissue distribution, specifically expressed in testis.

The protein resides in the nucleus. The catalysed reaction is a 2'-deoxycytidine in DNA + S-adenosyl-L-methionine = a 5-methyl-2'-deoxycytidine in DNA + S-adenosyl-L-homocysteine + H(+). In terms of biological role, DNA methyltransferase that specifically methylates the promoters of evolutionarily young retrotransposons in the male germline. De novo methylation and subsequent repression of transposable elements prevents their mobilization, which is essential for germline integrity. Compared to Dnmt3a and Dnmt3b, shows lower DNA methyltransferase efficiency. The sequence is that of DNA (cytosine-5)-methyltransferase 3C from Mus musculus (Mouse).